The sequence spans 3579 residues: Protocadherin-like wing polarity protein stan (3579 aa).

The first 29 residues, 1–29, serve as a signal peptide directing secretion; that stretch reads MQTREFPQRPLGLLLVLLVVLLQSSLIKS. Residues 30–2816 lie on the Extracellular side of the membrane; that stretch reads YLIIVHEDTP…EPSLLVQITS (2787 aa). N-linked (GlcNAc...) asparagine glycans are attached at residues N46, N179, and N340. 8 consecutive Cadherin domains span residues 360–464, 465–581, 582–689, 690–794, 795–897, 898–1007, 1008–1113, and 1114–1220; these read EQAL…SPTF, EAEQ…YPQF, SERT…APRF, YTSQ…DPAF, NPKY…APIF, ENAP…APAF, KSPL…PPTF, and ASDK…APVL. The N-linked (GlcNAc...) asparagine glycan is linked to N671. N-linked (GlcNAc...) asparagine glycosylation occurs at N886. 3 N-linked (GlcNAc...) asparagine glycosylation sites follow: N1269, N1374, and N1441. Residues 1482–1518 form the EGF-like 1; calcium-binding domain; the sequence is EVDLCYSDPCQNGGTCVRREGGYTCVCPSTHTGQNCE. 3 disulfide bridges follow: C1486-C1497, C1491-C1506, and C1508-C1517. A Laminin G-like 1 domain is found at 1556–1753; it reads LRARAFGRNS…VADNGTLAGC (198 aa). N-linked (GlcNAc...) asparagine glycans are attached at residues N1650, N1678, and N1747. 4 disulfides stabilise this stretch: C1727-C1753, C1760-C1771, C1765-C1780, and C1782-C1791. Residues 1756–1792 enclose the EGF-like 2; calcium-binding domain; that stretch reads KAPLCQSEPCFNGGTCREGWGTYSCECPEGYAGNSCQ. The Laminin G-like 2 domain maps to 1796 to 1963; it reads PAPWRFSGDG…TIRENVEDGC (168 aa). An N-linked (GlcNAc...) asparagine glycan is attached at N1843. 4 disulfides stabilise this stretch: C1937-C1963, C1969-C1979, C1973-C1988, and C1990-C1999. The EGF-like 3; calcium-binding domain maps to 1965–2000; the sequence is SRAQCPDHCPNHSSCQSSWDLSTCECDSGYVGTDCA. The N-linked (GlcNAc...) asparagine glycan is linked to N1975. N-linked (GlcNAc...) asparagine glycosylation is found at N2016, N2028, N2071, and N2088. Intrachain disulfides connect C2092–C2095, C2097–C2114, C2116–C2125, and C2128–C2140. One can recognise a Laminin EGF-like domain in the interval 2095–2142; that stretch reads CDCYSIGSFSGACNPLTGQCECREGVIGRRCDSCSNPYAEVTLSGCEV. 2 N-linked (GlcNAc...) asparagine glycosylation sites follow: N2196 and N2320. Residues 2553–2562 are compositionally biased toward basic and acidic residues; that stretch reads QETQRLEIPS. Disordered regions lie at residues 2553-2582, 2610-2635, and 2654-2684; these read QETQ…STEQ, HEIP…EREP, and VISP…GENE. The span at 2567–2579 shows a compositional bias: low complexity; that stretch reads SSSSPSSSSSSGS. Residues 2653 to 2803 form the GAIN-B domain; sequence EVISPDSPEM…AVIVDVIDPE (151 aa). 2 disulfide bridges follow: C2747–C2785 and C2762–C2787. The GPS stretch occupies residues 2747–2803; the sequence is CVRWNSFTNQWTRLGCQTEIPDFDGDFNPAAQQAILVNCSCTHISSYAVIVDVIDPE. N-linked (GlcNAc...) asparagine glycosylation occurs at N2784. A helical membrane pass occupies residues 2817–2837; it reads YSAFLVSLPLLLGVLLALALL. Over 2838-2845 the chain is Cytoplasmic; it reads RGQQTNSN. A helical transmembrane segment spans residues 2846-2866; that stretch reads TIHQNIVLCVFCAELLFFVGM. Over 2867-2883 the chain is Extracellular; that stretch reads QSRRQLLESEFPCKLTA. A helical membrane pass occupies residues 2884-2904; sequence ICLHYFWLAAFAWTTVDCVHL. Residues 2905 to 2919 are Cytoplasmic-facing; it reads YRMLTEMRDINHGPM. A helical transmembrane segment spans residues 2920–2940; sequence GFYFAMGYGAPAIVVGLSVGV. The Extracellular portion of the chain corresponds to 2941 to 2959; it reads RAHEYGNSLFCWLSVYEPV. A helical membrane pass occupies residues 2960–2980; the sequence is VWWLVGPIAGMSVVNLLILFV. Over 2981–3000 the chain is Cytoplasmic; that stretch reads SVKAAFTLKDHVLGFGNLRT. The helical transmembrane segment at 3001–3021 threads the bilayer; that stretch reads LLWLSVVSLPLMGVMWVLAVL. Residues 3022 to 3031 lie on the Extracellular side of the membrane; it reads AASEHSQLLS. Residues 3032–3052 form a helical membrane-spanning segment; the sequence is LLLSGVVLLHALFCLIGYCII. At 3053 to 3579 the chain is on the cytoplasmic side; the sequence is NKRVRENLQR…RNIDDDETTV (527 aa). Disordered regions lie at residues 3111 to 3225, 3343 to 3377, 3458 to 3486, and 3499 to 3579; these read GISA…TPAY, LYGR…SGSQ, YHQQ…YHFP, and LSHT…ETTV. Positions 3113–3128 are enriched in low complexity; it reads SASSTTSRSTAKTSSS. Over residues 3167 to 3191 the composition is skewed to basic and acidic residues; sequence RGGEEKPSRRQRKDSDSGSETDGRS. Residues S3199 and S3200 each carry the phosphoserine modification. Residues 3208 to 3223 are compositionally biased toward polar residues; sequence ARSSGTHRSTAVSSTP. Over residues 3343–3352 the composition is skewed to basic and acidic residues; that stretch reads LYGRRGEYPD. Residues 3459 to 3468 show a composition bias toward low complexity; it reads HQQQQQQQQH. The span at 3469–3482 shows a compositional bias: basic and acidic residues; that stretch reads HLQDRLSEGSDKNG. Over residues 3501 to 3513 the composition is skewed to polar residues; sequence HTQPPSLHGSQLM.

Belongs to the G-protein coupled receptor 2 family. As to quaternary structure, interacts with ATP6AP2 (via N-terminus). In terms of tissue distribution, in the pupal wing, expressed at relatively even levels in all regions. Abundant in 6-9 hours embryos. Expressed at higher levels in pupae than larvae.

The protein localises to the cell membrane. It localises to the apical cell membrane. Functionally, involved in the fz signaling pathway that controls wing tissue polarity. Also mediates homophilic cell adhesion. May play a role in initiating prehair morphogenesis. May play a critical role in tissue polarity and in formation of normal dendrite fields. During planar cell polarity, stabilizes asymmetric PCP domains together with ATP6AP2. The sequence is that of Protocadherin-like wing polarity protein stan (stan) from Drosophila melanogaster (Fruit fly).